A 495-amino-acid polypeptide reads, in one-letter code: REST corepressor 3 (495 aa).

Positions 1–83 constitute an ELM2 domain; that stretch reads MRVGAEYQAR…KSLADLPNFT (83 aa). A Glycyl lysine isopeptide (Lys-Gly) (interchain with G-Cter in SUMO2) cross-link involves residue Lys-20. An SANT 1 domain is found at 84 to 135; the sequence is PFPDEWTVEDKVLFEQAFSFHGKSFHRIQQMLPDKTIASLVKYYYSWKKTRS. The interval 147 to 219 is disordered; it reads LANRHNQGDS…SQRSKCRPPK (73 aa). Phosphoserine occurs at positions 156 and 171. Residues 162-184 are compositionally biased toward basic and acidic residues; it reads ETHPMDGNDSDYDPKKEAKKEGN. Residue Lys-193 forms a Glycyl lysine isopeptide (Lys-Gly) (interchain with G-Cter in SUMO2) linkage. The segment covering 205-217 has biased composition (basic residues); sequence QHRHHSQRSKCRP. Positions 237-273 form a coiled coil; that stretch reads AANTILRQLDMELISLKRQVQNAKQVNSALKQKMEGG. Residue Lys-285 forms a Glycyl lysine isopeptide (Lys-Gly) (interchain with G-Cter in SUMO2) linkage. The region spanning 285-336 is the SANT 2 domain; it reads KINARWTTEEQLLAVQGVRKYGKDFQAIADVIGNKTVGQVKNFFVNYRRRFN. Positions 346–495 are disordered; that stretch reads AEQGTQASNG…IQTDSQSSLH (150 aa). A compositionally biased stretch (polar residues) spans 348 to 357; the sequence is QGTQASNGDA. The residue at position 376 (Thr-376) is a Phosphothreonine. The segment covering 393–405 has biased composition (pro residues); that stretch reads PSPPAPSSTPTPT. Positions 419 to 428 are enriched in low complexity; sequence RPTLPAAPAL. Arg-445 and Arg-457 each carry asymmetric dimethylarginine. A compositionally biased stretch (polar residues) spans 475–495; that stretch reads VGGQQPPSLIGIQTDSQSSLH.

The protein belongs to the CoREST family.

Its subcellular location is the nucleus. Its function is as follows. May act as a component of a corepressor complex that represses transcription. The protein is REST corepressor 3 (RCOR3) of Homo sapiens (Human).